The primary structure comprises 292 residues: UTP--glucose-1-phosphate uridylyltransferase (292 aa).

Belongs to the UDPGP type 2 family. As to quaternary structure, interacts with FloT.

It is found in the cell membrane. It localises to the membrane raft. The catalysed reaction is alpha-D-glucose 1-phosphate + UTP + H(+) = UDP-alpha-D-glucose + diphosphate. Its pathway is glycolipid metabolism; diglucosyl-diacylglycerol biosynthesis. In terms of biological role, catalyzes the formation of UDP-glucose from glucose-1-phosphate and UTP. This is an intermediate step in the biosynthesis of diglucosyl-diacylglycerol (Glc2-DAG), i.e. the predominant glycolipid found in B.subtilis membrane, which is also used as a membrane anchor for lipoteichoic acid (LTA). Has a role in the biosynthesis of all phosphate-containing envelope polymers, since UDP-glucose serves as a glucosyl donor not only for the biosynthesis of LTA but also for wall teichoic acids (WTAs). Is required for biofilm formation. This is likely due to another role of UDP-glucose, which might also act as a metabolic signal regulating biofilm formation or may be involved in some unknown biosynthetic pathway essential for biofilm formation, e.g. the synthesis of an exopolysaccharide. The sequence is that of UTP--glucose-1-phosphate uridylyltransferase (gtaB) from Bacillus subtilis (strain 168).